We begin with the raw amino-acid sequence, 475 residues long: Glutamate--tRNA ligase 2 (475 aa).

A 'HIGH' region motif is present at residues 9–19; the sequence is PSPTGFLHIGS. The 'KMSKS' region motif lies at 238-242; it reads KLSKR. Lys-241 is a binding site for ATP.

It belongs to the class-I aminoacyl-tRNA synthetase family. Glutamate--tRNA ligase type 1 subfamily. As to quaternary structure, monomer.

The protein localises to the cytoplasm. It carries out the reaction tRNA(Glu) + L-glutamate + ATP = L-glutamyl-tRNA(Glu) + AMP + diphosphate. Functionally, catalyzes the attachment of glutamate to tRNA(Glu) in a two-step reaction: glutamate is first activated by ATP to form Glu-AMP and then transferred to the acceptor end of tRNA(Glu). The sequence is that of Glutamate--tRNA ligase 2 from Bartonella quintana (strain Toulouse) (Rochalimaea quintana).